Consider the following 806-residue polypeptide: Integrin beta-7 (806 aa).

Residues 1 to 19 (MVDSSTVLIFLLVLGGGQS) form the signal peptide. The Extracellular portion of the chain corresponds to 20–724 (ELDTKITSSG…PQEKGVDHTR (705 aa)). One can recognise a PSI domain in the interval 44 to 92 (SCQPVPSCQKCILSHPSCAWCKQLNFTASGEAEARRCARREELLARGCP). 26 disulfide bridges follow: Cys51–Cys476, Cys54–Cys80, Cys64–Cys91, Cys216–Cys223, Cys271–Cys311, Cys412–Cys428, Cys448–Cys474, Cys478–Cys497, Cys488–Cys500, Cys502–Cys511, Cys513–Cys545, Cys527–Cys543, Cys537–Cys548, Cys550–Cys559, Cys561–Cys582, Cys566–Cys580, Cys574–Cys585, Cys587–Cys596, Cys598–Cys621, Cys605–Cys619, Cys613–Cys624, Cys626–Cys635, Cys638–Cys641, Cys645–Cys688, Cys651–Cys670, and Cys654–Cys666. N-linked (GlcNAc...) asparagine glycosylation is present at Asn68. Over residues 98 to 107 (EPRGRQEVLQ) the composition is skewed to basic and acidic residues. The disordered stretch occupies residues 98 to 123 (EPRGRQEVLQDKPLSQGDRGEGATQL). Residues 150–389 (YPVDLYYLMD…QLIMDAYDSL (240 aa)) form the VWFA domain. 2 residues coordinate Mg(2+): Ser161 and Ser163. Ca(2+)-binding residues include Ser163, Asp166, Asp167, and Asp198. N-linked (GlcNAc...) asparagine glycosylation is present at Asn250. Asn254, Asp256, Pro258, and Glu259 together coordinate Ca(2+). Glu259 is a Mg(2+) binding site. Asn279 carries N-linked (GlcNAc...) asparagine glycosylation. 2 residues coordinate Ca(2+): Asp289 and Glu373. An N-linked (GlcNAc...) asparagine glycan is attached at Asn434. I-EGF domains follow at residues 478-512 (CGDA…QLCE), 513-560 (CSEA…RLCE), 561-597 (CDDA…RACE), and 598-636 (CSKS…ALCD). Asn531 carries an N-linked (GlcNAc...) asparagine glycan. Asn590 is a glycosylation site (N-linked (GlcNAc...) asparagine). N-linked (GlcNAc...) asparagine glycosylation is found at Asn665 and Asn674. A helical membrane pass occupies residues 725–745 (AIILGCTGGIVAVGLGLVLAY). Over 746–806 (RLSVEIYDRR…PSLSLTREAD (61 aa)) the chain is Cytoplasmic. The segment at 786-806 (NPRFQGTNGRSPSLSLTREAD) is disordered.

The protein belongs to the integrin beta chain family. As to quaternary structure, heterodimer of an alpha and a beta subunit. ITGB7/beta-7 associates with either ITGA4/alpha-4 or ITGAE/alpha-E. Integrin ITGA4/ITGB7 interacts with MADCAM1. Integrin ITGA4/ITGB7 interacts with VCAM1 and fibronectin. Interacts with FLNA (via filamin repeats 4, 9, 12, 17, 19, 21, and 23).

The protein resides in the cell membrane. Integrin ITGA4/ITGB7 (alpha-4/beta-7) (Peyer patches-specific homing receptor LPAM-1) is an adhesion molecule that mediates lymphocyte migration and homing to gut-associated lymphoid tissue (GALT). Integrin ITGA4/ITGB7 interacts with the cell surface adhesion molecules MADCAM1 which is normally expressed by the vascular endothelium of the gastrointestinal tract. Also interacts with VCAM1 and fibronectin, an extracellular matrix component. It recognizes one or more domains within the alternatively spliced CS-1 region of fibronectin. Interactions involve the tripeptide L-D-T in MADCAM1, and L-D-V in fibronectin. Integrin ITGAE/ITGB7 (alpha-E/beta-7, HML-1) is a receptor for E-cadherin. The sequence is that of Integrin beta-7 (Itgb7) from Mus musculus (Mouse).